A 296-amino-acid chain; its full sequence is Zinc finger protein 75A (296 aa).

Positions 1–66 constitute a KRAB domain; sequence MYFSQEEWEL…VSPEFKDSAG (66 aa). C2H2-type zinc fingers lie at residues 161–183, 189–211, 217–239, 245–267, and 273–295; these read FKCQ…QRIH, YKCQ…LTTH, YKCS…QRTH, FTCH…RRTH, and YTCS…QKLH.

It belongs to the krueppel C2H2-type zinc-finger protein family.

Its subcellular location is the nucleus. Its function is as follows. May be involved in transcriptional regulation. This Homo sapiens (Human) protein is Zinc finger protein 75A (ZNF75A).